Consider the following 187-residue polypeptide: MSVTSLSFPYGESICWYSPDELDRLPDGALADWLLASGSLTARLRAHCSQFEVRVLGEAMLPGLPGEPQLPHTWVREVLLILDGTPWVFARTLVPEALLTRCGDELTALGDRPLGELLFSSNLFTPGRIEIAGFHSCGTLARLAESLGQNVHGRLWGRRRYFEREGDELIVSEIFLPAAMDYILGPQ.

Substrate is bound by residues Arg76, Leu114, and Glu173.

The protein belongs to the UbiC family.

It localises to the cytoplasm. It carries out the reaction chorismate = 4-hydroxybenzoate + pyruvate. It functions in the pathway cofactor biosynthesis; ubiquinone biosynthesis. In terms of biological role, removes the pyruvyl group from chorismate, with concomitant aromatization of the ring, to provide 4-hydroxybenzoate (4HB) for the ubiquinone pathway. In Shewanella amazonensis (strain ATCC BAA-1098 / SB2B), this protein is Probable chorismate pyruvate-lyase.